A 142-amino-acid polypeptide reads, in one-letter code: ATP synthase epsilon chain (142 aa).

The protein belongs to the ATPase epsilon chain family. In terms of assembly, F-type ATPases have 2 components, CF(1) - the catalytic core - and CF(0) - the membrane proton channel. CF(1) has five subunits: alpha(3), beta(3), gamma(1), delta(1), epsilon(1). CF(0) has three main subunits: a, b and c.

The protein resides in the cell inner membrane. Produces ATP from ADP in the presence of a proton gradient across the membrane. This Histophilus somni (strain 2336) (Haemophilus somnus) protein is ATP synthase epsilon chain.